The chain runs to 358 residues: Alanine racemase (358 aa).

The Proton acceptor; specific for D-alanine role is filled by Lys34. Lys34 bears the N6-(pyridoxal phosphate)lysine mark. Arg129 contacts substrate. The active-site Proton acceptor; specific for L-alanine is the Tyr254. Met302 contacts substrate.

The protein belongs to the alanine racemase family. It depends on pyridoxal 5'-phosphate as a cofactor.

It carries out the reaction L-alanine = D-alanine. It functions in the pathway amino-acid biosynthesis; D-alanine biosynthesis; D-alanine from L-alanine: step 1/1. Catalyzes the interconversion of L-alanine and D-alanine. May also act on other amino acids. The polypeptide is Alanine racemase (alr) (Hamiltonella defensa subsp. Acyrthosiphon pisum (strain 5AT)).